The following is a 143-amino-acid chain: Agaricus bisporus lectin (143 aa).

Residues A29, S48, G49, and N73 each contribute to the beta-D-Gal-(1-&gt;3)-alpha-D-GalNAc site. N-acetyl-beta-D-glucosamine contacts are provided by T82, R103, and Y114.

It belongs to the fungal fruit body lectin family. As to quaternary structure, homotetramer.

Lectin that recognizes O-linked galactose-beta-1,3-N-acetylgalactosamine, a disaccharide (Thomsen-Friedenreich antigen or T-disaccharide), present on cell surface glycoproteins. Can also bind galactose-beta-1,3-N-acetylglucosamine. Does not bind monosaccharides. Can be internalized by clathrin-coated vesicles after binding to surface glycoproteins. After internalization it inhibits nuclear import of nuclear localization signal dependent proteins. Inhibits proliferation of malignant cells without cytotoxicity for normal cells. The sequence is that of Agaricus bisporus lectin from Agaricus bisporus (White button mushroom).